A 370-amino-acid chain; its full sequence is 3-dehydroquinate synthase (370 aa).

NAD(+)-binding positions include 112–116 (GVVGD), 136–137 (TS), K149, K158, and 176–179 (TLRT). The Zn(2+) site is built by E191, H254, and H276.

It belongs to the sugar phosphate cyclases superfamily. Dehydroquinate synthase family. Co(2+) is required as a cofactor. The cofactor is Zn(2+). Requires NAD(+) as cofactor.

The protein localises to the cytoplasm. It catalyses the reaction 7-phospho-2-dehydro-3-deoxy-D-arabino-heptonate = 3-dehydroquinate + phosphate. It functions in the pathway metabolic intermediate biosynthesis; chorismate biosynthesis; chorismate from D-erythrose 4-phosphate and phosphoenolpyruvate: step 2/7. Catalyzes the conversion of 3-deoxy-D-arabino-heptulosonate 7-phosphate (DAHP) to dehydroquinate (DHQ). The sequence is that of 3-dehydroquinate synthase from Xanthomonas oryzae pv. oryzae (strain MAFF 311018).